The primary structure comprises 147 residues: 3-dehydroquinate dehydratase (147 aa).

Y24 functions as the Proton acceptor in the catalytic mechanism. Substrate is bound by residues N75, H81, and D88. The Proton donor role is filled by H101. Substrate is bound by residues 102-103 (IS) and R112.

Belongs to the type-II 3-dehydroquinase family. In terms of assembly, homododecamer.

It carries out the reaction 3-dehydroquinate = 3-dehydroshikimate + H2O. It participates in metabolic intermediate biosynthesis; chorismate biosynthesis; chorismate from D-erythrose 4-phosphate and phosphoenolpyruvate: step 3/7. Its function is as follows. Catalyzes a trans-dehydration via an enolate intermediate. This is 3-dehydroquinate dehydratase from Cereibacter sphaeroides (strain KD131 / KCTC 12085) (Rhodobacter sphaeroides).